Here is a 586-residue protein sequence, read N- to C-terminus: Kinesin-like protein KIF25 (586 aa).

Residues 10 to 94 (SFWEQRTRQL…VIQKLNQDIQ (85 aa)) are a coiled coil. A Kinesin motor domain is found at 173–565 (NIRVHCRIRP…LGFGIRARQV (393 aa)). 267 to 274 (GQTGSGKS) is an ATP binding site. Disordered regions lie at residues 417-460 (TADQ…AGRA) and 564-586 (QVQRGPARKRPPSSQMEGKRRPD).

Belongs to the TRAFAC class myosin-kinesin ATPase superfamily. Kinesin family. Homotetramer.

It is found in the cytoplasm. The protein localises to the cytoskeleton. The protein resides in the microtubule organizing center. Its subcellular location is the centrosome. Functionally, minus-end microtubule-dependent motor protein. Acts as a negative regulator of centrosome separation required to prevent premature centrosome separation during interphase. Required to maintain a centered nucleus to ensure that the spindle is stably oriented at the onset of mitosis. May also act as a negative regulator of amino acid starvation-induced autophagy. This Macaca fascicularis (Crab-eating macaque) protein is Kinesin-like protein KIF25.